The primary structure comprises 154 residues: Transcriptional repressor NrdR (154 aa).

Residues 3-34 (CPFCGNENTRVIDTRAAEDGFAIKRRRECENC) fold into a zinc finger. The ATP-cone domain maps to 49–139 (LIVVKKDGSK…VYRQFKDVNS (91 aa)).

This sequence belongs to the NrdR family. Zn(2+) serves as cofactor.

In terms of biological role, negatively regulates transcription of bacterial ribonucleotide reductase nrd genes and operons by binding to NrdR-boxes. This chain is Transcriptional repressor NrdR, found in Carboxydothermus hydrogenoformans (strain ATCC BAA-161 / DSM 6008 / Z-2901).